The following is a 195-amino-acid chain: Protein hunchback (195 aa).

Disordered regions lie at residues 16–57, 64–83, and 155–195; these read SHHH…SHTN, LKQQ…QQPM, and LTPP…KYMA. Residues 17–29 are compositionally biased toward basic residues; it reads HHHHHHHAHHSHH. 2 stretches are compositionally biased toward low complexity: residues 33–44 and 66–81; these read SNSNSNASSPHQ and QQQQ…QQQQ. Over residues 176-195 the composition is skewed to basic and acidic residues; it reads EPEKEHDLMSNSSEDMKYMA.

It belongs to the hunchback C2H2-type zinc-finger protein family.

The protein localises to the nucleus. Gap class segmentation protein that controls development of head structures. This Drosophila dasycnemia (Fruit fly) protein is Protein hunchback (hb).